The chain runs to 378 residues: Sterol 24-C-methyltransferase erg6 (378 aa).

Belongs to the class I-like SAM-binding methyltransferase superfamily. Erg6/SMT family.

Its subcellular location is the nucleus. The protein localises to the endoplasmic reticulum. It carries out the reaction zymosterol + S-adenosyl-L-methionine = fecosterol + S-adenosyl-L-homocysteine + H(+). The catalysed reaction is lanosterol + S-adenosyl-L-methionine = eburicol + S-adenosyl-L-homocysteine + H(+). The protein operates within steroid metabolism; ergosterol biosynthesis. Its function is as follows. Sterol 24-C-methyltransferase; part of the third module of ergosterol biosynthesis pathway that includes by the late steps of the pathway. Erg6 catalyzes the methyl transfer from S-adenosyl-methionine to the C-24 of zymosterol to form fecosterol. The third module or late pathway involves the ergosterol synthesis itself through consecutive reactions that mainly occur in the endoplasmic reticulum (ER) membrane. Firstly, the squalene synthase erg9 catalyzes the condensation of 2 farnesyl pyrophosphate moieties to form squalene, which is the precursor of all steroids. Secondly, squalene is converted into lanosterol by the consecutive action of the squalene epoxidase erg1 and the lanosterol synthase erg7. The lanosterol 14-alpha-demethylase erg11/cyp1 catalyzes C14-demethylation of lanosterol to produce 4,4'-dimethyl cholesta-8,14,24-triene-3-beta-ol. In the next steps, a complex process involving various demethylation, reduction and desaturation reactions catalyzed by the C-14 reductase erg24 and the C-4 demethylation complex erg25-erg26-erg27 leads to the production of zymosterol. Erg28 likely functions in the C-4 demethylation complex reaction by tethering erg26 and Erg27 to the endoplasmic reticulum or to facilitate interaction between these proteins. Then, the sterol 24-C-methyltransferase erg6 catalyzes the methyl transfer from S-adenosyl-methionine to the C-24 of zymosterol to form fecosterol. The C-8 sterol isomerase erg2 catalyzes the reaction which results in unsaturation at C-7 in the B ring of sterols and thus converts fecosterol to episterol. The sterol-C5-desaturases erg31 and erg32 then catalyze the introduction of a C-5 double bond in the B ring to produce 5-dehydroepisterol. The C-22 sterol desaturase erg5 further converts 5-dehydroepisterol into ergosta-5,7,22,24(28)-tetraen-3beta-ol by forming the C-22(23) double bond in the sterol side chain. Finally, ergosta-5,7,22,24(28)-tetraen-3beta-ol is substrate of the C-24(28) sterol reductase erg4 to produce ergosterol. In the genus Schizosaccharomyces, a second route exists between lanosterol and fecosterol, via the methylation of lanosterol to eburicol by erg6, followed by C14-demethylation by erg11/cyp1 and C4-demethylation by the demethylation complex erg25-erg26-erg27. The polypeptide is Sterol 24-C-methyltransferase erg6 (Schizosaccharomyces pombe (strain 972 / ATCC 24843) (Fission yeast)).